The chain runs to 75 residues: Large ribosomal subunit protein bL31 (75 aa).

Positions 16, 18, 37, and 40 each coordinate Zn(2+).

It belongs to the bacterial ribosomal protein bL31 family. Type A subfamily. In terms of assembly, part of the 50S ribosomal subunit. Zn(2+) serves as cofactor.

Binds the 23S rRNA. The protein is Large ribosomal subunit protein bL31 of Legionella pneumophila (strain Paris).